The chain runs to 302 residues: Exodeoxyribonuclease (302 aa).

The enzyme catalyses Exonucleolytic cleavage in the 5'- to 3'-direction to yield nucleoside 5'-phosphates.. This enzyme is essential for phage DNA replication; it is believed to function in the removal of DNA-linked RNA primers. It is also necessary for host DNA degradation and phage genetic recombination. This chain is Exodeoxyribonuclease (6), found in Enterobacteria phage T3 (Bacteriophage T3).